The chain runs to 930 residues: Inter-alpha-trypsin inhibitor heavy chain H4 (930 aa).

The first 28 residues, 1–28 (MKPPRPVRTCSKVLVLLSLLAIHQTTTA), serve as a signal peptide directing secretion. The VIT domain occupies 29 to 148 (EKNGIDIYSL…KITFELVYEE (120 aa)). N-linked (GlcNAc...) asparagine glycosylation is found at asparagine 81 and asparagine 207. Positions 272-432 (PKNVVFVIDK…YAFLEKLALD (161 aa)) constitute a VWFA domain. The N-linked (GlcNAc...) asparagine; atypical glycan is linked to asparagine 274. 2 N-linked (GlcNAc...) asparagine glycosylation sites follow: asparagine 517 and asparagine 577. The interval 595–618 (KPDDQEQSQVAEKPMEGESRNRNV) is disordered. A proline-rich (PRR) potential bioactive peptide region spans residues 658–688 (MNFRPGVLSSRQLGLPGPPDVPDHAAYHPFR). The propeptide at 662–688 (PGVLSSRQLGLPGPPDVPDHAAYHPFR) is potentially active peptide. O-linked (GalNAc...) threonine glycosylation is found at threonine 719, threonine 720, and threonine 722. The segment at 719–725 (TTMTTQT) is O-glycosylated at three sites. Cysteines 747 and 925 form a disulfide.

Belongs to the ITIH family. In terms of assembly, interacts (via C-terminus) with DNAJC1 (via SANT 2 domain); this interaction protects ITIH4 against cleavage by kallikrein in vitro. Post-translationally, cleaved by plasma kallikrein to yield 100 kDa and 35 kDa fragments, and the resulting 100 kDa fragment is further converted to a 70 kDa fragment. N- and O-glycosylated. In urine, O-linked glycosylation on threonine residues in the region from Thr-719 to Thr-725 consists of core 1 or possibly core 8 glycans. Mainly Hex(HexNAc)(2), but also some Hex(3)(HexNAc)(3). N-glycosylated but not O-glycosylated in plasma. In terms of tissue distribution, liver specific.

The protein resides in the secreted. Functionally, type II acute-phase protein (APP) involved in inflammatory responses to trauma. May also play a role in liver development or regeneration. This is Inter-alpha-trypsin inhibitor heavy chain H4 (ITIH4) from Homo sapiens (Human).